We begin with the raw amino-acid sequence, 424 residues long: Histidine--tRNA ligase (424 aa).

Belongs to the class-II aminoacyl-tRNA synthetase family. In terms of assembly, homodimer.

The protein localises to the cytoplasm. The catalysed reaction is tRNA(His) + L-histidine + ATP = L-histidyl-tRNA(His) + AMP + diphosphate + H(+). The sequence is that of Histidine--tRNA ligase from Marinomonas sp. (strain MWYL1).